A 716-amino-acid polypeptide reads, in one-letter code: Delta-1-pyrroline-5-carboxylate synthase 1 (716 aa).

The tract at residues 1–296 (MASVDPSRSF…WESSKDVSTR (296 aa)) is glutamate 5-kinase. Positions 60, 157, and 176 each coordinate substrate. ATP-binding positions include 196 to 197 (SD), 202 to 207 (YSGPPS), and 236 to 242 (RGGMTAK). Positions 297 to 716 (EMAVAARDCS…VYTHKSLPLQ (420 aa)) are gamma-glutamyl phosphate reductase.

It in the N-terminal section; belongs to the glutamate 5-kinase family. In the C-terminal section; belongs to the gamma-glutamyl phosphate reductase family. As to expression, expressed at high levels in leaves.

It catalyses the reaction L-glutamate + ATP = L-glutamyl 5-phosphate + ADP. The enzyme catalyses L-glutamate 5-semialdehyde + phosphate + NADP(+) = L-glutamyl 5-phosphate + NADPH + H(+). The protein operates within amino-acid biosynthesis; L-proline biosynthesis; L-glutamate 5-semialdehyde from L-glutamate: step 1/2. It functions in the pathway amino-acid biosynthesis; L-proline biosynthesis; L-glutamate 5-semialdehyde from L-glutamate: step 2/2. Feedback regulated by proline. Its function is as follows. P5CS plays a key role in proline biosynthesis, leading to osmoregulation in plants. Involved in abiotic stress tolerance. In Oryza sativa subsp. japonica (Rice), this protein is Delta-1-pyrroline-5-carboxylate synthase 1.